The chain runs to 341 residues: Protein BEARSKIN2 (341 aa).

An NAC domain is found at 9–160; sequence VPPGFRFHPT…GWVVCRVFMK (152 aa). Residues 109 to 166 mediate DNA binding; that stretch reads IGMRKTLVFYKGRAPHGQKTDWIMHEYRLEDADDPQANPSEDGWVVCRVFMKKNLFKV.

In terms of tissue distribution, expressed throughout the root cap, in both columella (COL) and lateral root cap (LRC) cells, with higher levels in the COL-adjoining LRC than the upper LRC. Also present at low levels expression in the tips of cotyledons and the cotyledon vasculature, as weel as in vasculature of the first pair of true leaves and at the hydathodes.

It is found in the nucleus. Transcription activator. Together with BRN1 and SMB, regulates cellular maturation of root cap. Promotes the expression of genes involved in secondary cell walls (SCW) biosynthesis. The sequence is that of Protein BEARSKIN2 (BRN2) from Arabidopsis thaliana (Mouse-ear cress).